The primary structure comprises 110 residues: U1-lycotoxin-Ls1cc (110 aa).

A signal peptide spans 1 to 20 (MKFVLLFGVLLVTLFSYSSA). Residues 21-44 (EMLDDFDQADEDELLSLIEKEEAR) constitute a propeptide that is removed on maturation. Intrachain disulfides connect C47/C62, C54/C71, C61/C89, and C73/C87.

It belongs to the neurotoxin 19 (CSTX) family. 03 subfamily. As to expression, expressed by the venom gland.

The protein resides in the secreted. This Lycosa singoriensis (Wolf spider) protein is U1-lycotoxin-Ls1cc.